A 690-amino-acid chain; its full sequence is Probable xyloglucan glycosyltransferase 1 (690 aa).

2 helical membrane-spanning segments follow: residues 120 to 140 (AFLL…AQGW) and 166 to 186 (LEYL…LFLI). Asp272 is an active-site residue. Substrate contacts are provided by Asp331 and Asp333. Asp425 is a catalytic residue. Transmembrane regions (helical) follow at residues 503-523 (LILP…TMFV) and 528-548 (LPAW…ILPA). The segment at 607–637 (QPKQQRVGSAPNLDSLAKESHPKKDSKKKKH) is disordered. The next 2 helical transmembrane spans lie at 640-659 (IYQK…ARSL) and 665-685 (IHFY…LDLI).

Belongs to the glycosyltransferase 2 family. Plant cellulose synthase-like C subfamily.

The protein resides in the golgi apparatus membrane. Probable beta-1,4-glucan synthase rather involved in the synthesis of the xyloglucan backbone than cellulose. Seems to work simultaneously with xyloglucan 6-xylosyltransferase. Xyloglucan is a noncellulosic polysaccharides of plant cell wall and consists of a glucan backbone substituted by xylose, galactose and fucose. This chain is Probable xyloglucan glycosyltransferase 1 (CSLC1), found in Oryza sativa subsp. japonica (Rice).